A 545-amino-acid chain; its full sequence is GPI transamidase component PIG-T homolog (545 aa).

The signal sequence occupies residues 1–22; the sequence is MKKNGCLLLFAYSLLSFSLTAA. Over 23–493 the chain is Lumenal; sequence TIDETYDESL…PTPDFSMPYN (471 aa). Residues asparagine 168, asparagine 227, asparagine 336, asparagine 391, and asparagine 467 are each glycosylated (N-linked (GlcNAc...) asparagine). Residues 494–514 traverse the membrane as a helical segment; that stretch reads VIIFTSTVIALTFGGIFNLLT. The Cytoplasmic portion of the chain corresponds to 515–545; it reads RRFVPQQSKFQNRQPSMLQRLKEKIFHKKRG.

It belongs to the PIGT family. In terms of assembly, forms a complex with PIG-S homolog, PIG-U homolog and GPI8. The disulfide bond between PIGK/GPI8 and PIGT is important for normal enzyme activity.

Its subcellular location is the endoplasmic reticulum membrane. It functions in the pathway glycolipid biosynthesis; glycosylphosphatidylinositol-anchor biosynthesis. Component of the GPI transamidase complex. Involved in transfer of GPI to proteins. The chain is GPI transamidase component PIG-T homolog (gpi16) from Schizosaccharomyces pombe (strain 972 / ATCC 24843) (Fission yeast).